Here is a 167-residue protein sequence, read N- to C-terminus: NADH-quinone oxidoreductase subunit I 1 (167 aa).

4Fe-4S ferredoxin-type domains follow at residues 52 to 82 and 98 to 127; these read LQRD…IEAA and KVYN…HGHG. [4Fe-4S] cluster is bound by residues C62, C65, C68, C72, C107, C110, C113, and C117. The segment at 148-167 is disordered; sequence PVPPGAKPPSMADEVPAGAH.

This sequence belongs to the complex I 23 kDa subunit family. As to quaternary structure, NDH-1 is composed of 14 different subunits. Subunits NuoA, H, J, K, L, M, N constitute the membrane sector of the complex. It depends on [4Fe-4S] cluster as a cofactor.

The protein resides in the cell inner membrane. It catalyses the reaction a quinone + NADH + 5 H(+)(in) = a quinol + NAD(+) + 4 H(+)(out). Functionally, NDH-1 shuttles electrons from NADH, via FMN and iron-sulfur (Fe-S) centers, to quinones in the respiratory chain. The immediate electron acceptor for the enzyme in this species is believed to be ubiquinone. Couples the redox reaction to proton translocation (for every two electrons transferred, four hydrogen ions are translocated across the cytoplasmic membrane), and thus conserves the redox energy in a proton gradient. This is NADH-quinone oxidoreductase subunit I 1 from Solibacter usitatus (strain Ellin6076).